The following is a 189-amino-acid chain: CASP-like protein 1F2 (189 aa).

Topologically, residues 1–27 (MESLEVANGKSSALGVSREASSPPQMG) are cytoplasmic. A helical transmembrane segment spans residues 28–48 (FFIAQVVLRFFTLAFTGAAIA). Topologically, residues 49 to 77 (VMVTAKETVEVFSISFTVRYSYLSAFKFL) are extracellular. The helical transmembrane segment at 78–98 (VGADAVVCGFSMLSLIFVSIF) threads the bilayer. The Cytoplasmic segment spans residues 99–113 (NKGKSNHYFFLYFHD). Residues 114–134 (LILMVLSMSACAAATAVGYVG) form a helical membrane-spanning segment. Residues 135-156 (RYGQDKAAWMAVCGNVKMFCDK) are Extracellular-facing. Residues 157–177 (ALASILLSLIGFICLFLLTIM) traverse the membrane as a helical segment. Residues 178–189 (AARNLRVSGHLI) lie on the Cytoplasmic side of the membrane.

This sequence belongs to the Casparian strip membrane proteins (CASP) family. In terms of assembly, homodimer and heterodimers.

Its subcellular location is the cell membrane. This chain is CASP-like protein 1F2, found in Vitis vinifera (Grape).